The following is a 626-amino-acid chain: DNA mismatch repair protein MutL (626 aa).

Residues 377–413 (EEPQAVKQPTQLWQPSTKPIIEEPIQEEKSWDSNEEG) are disordered. Residues 383 to 393 (KQPTQLWQPST) show a composition bias toward polar residues.

It belongs to the DNA mismatch repair MutL/HexB family.

In terms of biological role, this protein is involved in the repair of mismatches in DNA. It is required for dam-dependent methyl-directed DNA mismatch repair. May act as a 'molecular matchmaker', a protein that promotes the formation of a stable complex between two or more DNA-binding proteins in an ATP-dependent manner without itself being part of a final effector complex. This chain is DNA mismatch repair protein MutL, found in Bacillus anthracis (strain A0248).